Here is a 259-residue protein sequence, read N- to C-terminus: Small ribosomal subunit protein uS2 (259 aa).

Belongs to the universal ribosomal protein uS2 family.

The chain is Small ribosomal subunit protein uS2 from Streptococcus pneumoniae (strain 70585).